The chain runs to 600 residues: Spore coat protein SP96 (600 aa).

The 120-residue stretch at 21–140 (QSCSSYSGDN…DVCQCKGGQT (120 aa)) folds into the DSCP-N domain. The segment at 139 to 178 (QTSGGSTTGSQTSGGSTSGGSTTGSQTSGGSTTGSQTSGS) is disordered. Over residues 161 to 178 (TGSQTSGGSTTGSQTSGS) the composition is skewed to low complexity. Follistatin-like domains are found at residues 184–206 (SCSN…AVCV), 220–243 (PCDT…AKCT), 267–289 (LCDN…AKCI), 297–319 (VCRN…PICV), 331–359 (TCND…AKCC), and 394–416 (PCSV…AVCL). The segment at 420 to 530 (TTTTGSTSDS…ASSSSASSSS (111 aa)) is disordered.

In terms of processing, glycosylated; may contain fucose and GlcNAc-alpha-1-P-Ser.

It is found in the spore wall. This chain is Spore coat protein SP96 (cotA), found in Dictyostelium discoideum (Social amoeba).